We begin with the raw amino-acid sequence, 239 residues long: 1-(5-phosphoribosyl)-5-[(5-phosphoribosylamino)methylideneamino] imidazole-4-carboxamide isomerase (239 aa).

Asp8 functions as the Proton acceptor in the catalytic mechanism. The active-site Proton donor is the Asp129.

It belongs to the HisA/HisF family.

The protein localises to the cytoplasm. It carries out the reaction 1-(5-phospho-beta-D-ribosyl)-5-[(5-phospho-beta-D-ribosylamino)methylideneamino]imidazole-4-carboxamide = 5-[(5-phospho-1-deoxy-D-ribulos-1-ylimino)methylamino]-1-(5-phospho-beta-D-ribosyl)imidazole-4-carboxamide. Its pathway is amino-acid biosynthesis; L-histidine biosynthesis; L-histidine from 5-phospho-alpha-D-ribose 1-diphosphate: step 4/9. The polypeptide is 1-(5-phosphoribosyl)-5-[(5-phosphoribosylamino)methylideneamino] imidazole-4-carboxamide isomerase (Bacillus thuringiensis (strain Al Hakam)).